Consider the following 64-residue polypeptide: MMVPVRCFTCGTVVGEHWGEFKERAREGDEDPAEVLDELGVERACCRRMLVSHKDLVDIVSPYQ.

Zn(2+) is bound by residues cysteine 7, cysteine 10, cysteine 45, and cysteine 46.

This sequence belongs to the archaeal Rpo10/eukaryotic RPB10 RNA polymerase subunit family. As to quaternary structure, part of the RNA polymerase complex. The cofactor is Zn(2+).

The protein localises to the cytoplasm. It catalyses the reaction RNA(n) + a ribonucleoside 5'-triphosphate = RNA(n+1) + diphosphate. DNA-dependent RNA polymerase (RNAP) catalyzes the transcription of DNA into RNA using the four ribonucleoside triphosphates as substrates. The sequence is that of DNA-directed RNA polymerase subunit Rpo10 from Natronomonas pharaonis (strain ATCC 35678 / DSM 2160 / CIP 103997 / JCM 8858 / NBRC 14720 / NCIMB 2260 / Gabara) (Halobacterium pharaonis).